Reading from the N-terminus, the 134-residue chain is Protein dpy-30 homolog (134 aa).

Residues 1 to 81 (MEAKTDAPIS…ETNNMPTRQY (81 aa)) form a disordered region. The segment covering 31–68 (AQANPTAAPGAPPSGAIAVGQSTNPVAQQQQQPAVAKK) has biased composition (low complexity). Residues 71–81 (SETNNMPTRQY) are compositionally biased toward polar residues.

The protein belongs to the dpy-30 family. As to quaternary structure, core component of several methyltransferase-containing complexes. Component of the SET1 complex, composed at least of the catalytic subunit Set1, wds/WDR5, Wdr82, Rbbp5, ash2, Cfp1/CXXC1, hcf and Dpy-30L1. Component of the MLL3/4 complex composed at least of the catalytic subunit trr, ash2, Rbbp5, Dpy-30L1, wds, hcf, ptip, Pa1, Utx, Lpt and Ncoa6. In terms of tissue distribution, expressed in larval brain, gonad, imaginal disk and salivary gland and in adult brain, testis, ovary and salivary gland.

The protein resides in the nucleus. Its function is as follows. Component of the SET1 complex that specifically di- and trimethylates 'Lys-4' of histone H3 and of the MLL3/4 complex which also methylates histone H3 'Lys-4'. Inhibits MTF-1 transcription factor activity. This is Protein dpy-30 homolog from Drosophila melanogaster (Fruit fly).